The sequence spans 450 residues: 3-phosphoshikimate 1-carboxyvinyltransferase (450 aa).

Residues Lys23, Ser24, and Arg28 each coordinate 3-phosphoshikimate. Lys23 is a binding site for phosphoenolpyruvate. Phosphoenolpyruvate is bound by residues Gly96 and Arg124. 3-phosphoshikimate is bound by residues Ser167, Ser168, Gln169, Ser196, Glu311, and His340. Residue Gln169 participates in phosphoenolpyruvate binding. Catalysis depends on Glu311, which acts as the Proton acceptor. The phosphoenolpyruvate site is built by Arg344, Arg385, and Lys410. Residues 426–450 (GQGWGYPQPRSGQRARRATGQGSGG) are disordered.

The protein belongs to the EPSP synthase family. In terms of assembly, monomer.

Its subcellular location is the cytoplasm. The enzyme catalyses 3-phosphoshikimate + phosphoenolpyruvate = 5-O-(1-carboxyvinyl)-3-phosphoshikimate + phosphate. It participates in metabolic intermediate biosynthesis; chorismate biosynthesis; chorismate from D-erythrose 4-phosphate and phosphoenolpyruvate: step 6/7. Catalyzes the transfer of the enolpyruvyl moiety of phosphoenolpyruvate (PEP) to the 5-hydroxyl of shikimate-3-phosphate (S3P) to produce enolpyruvyl shikimate-3-phosphate and inorganic phosphate. In Mycobacterium bovis (strain ATCC BAA-935 / AF2122/97), this protein is 3-phosphoshikimate 1-carboxyvinyltransferase.